The following is a 681-amino-acid chain: GAS2-like protein 1 (681 aa).

At alanine 2 the chain carries N-acetylalanine. The region spanning 27 to 148 is the Calponin-homology (CH) domain; sequence EAMKEDLAEW…CLLEVARRGA (122 aa). Disordered regions lie at residues 168-204, 278-509, and 536-681; these read LRAAPPAPNAPAAGEDTTETAPAPGTPARGPRMTPSD, STAH…PLQL, and ASVT…DSWM. Positions 186–199 are enriched in low complexity; that stretch reads ETAPAPGTPARGPR. Position 193 is a phosphothreonine (threonine 193). The GAR domain maps to 203–275; the sequence is SDLRNLDELV…HYLDKHDPCR (73 aa). Residues 291–303 show a composition bias toward polar residues; sequence FSPQRVSPTTSPR. A phosphoserine mark is found at serine 306 and serine 316. Residues 327–342 are compositionally biased toward basic and acidic residues; the sequence is STKEGPETPPRPRDQL. A Phosphothreonine modification is found at threonine 334. Phosphoserine is present on residues serine 352 and serine 355. Residues 354–365 are compositionally biased toward low complexity; it reads DSDSSASSAQSG. A compositionally biased stretch (basic and acidic residues) spans 370-381; the sequence is RSDDTGTGPRRE. The residue at position 391 (threonine 391) is a Phosphothreonine. Serine 394 is modified (phosphoserine). The segment covering 404–413 has biased composition (basic and acidic residues); that stretch reads QSRDRLDRGR. Serine 436, serine 438, serine 479, and serine 486 each carry phosphoserine. The segment covering 437–454 has biased composition (basic and acidic residues); that stretch reads QSREEQAVLLVRRDRDGQ. Positions 475-493 are enriched in low complexity; the sequence is PRARSPAAPRLSRVSSPSP. Arginine 487 carries the omega-N-methylarginine modification. Phosphoserine is present on residues serine 490 and serine 492. Threonine 498 carries the phosphothreonine modification. Arginine 504 is modified (omega-N-methylarginine). Residues 542–556 show a composition bias toward pro residues; sequence GPVPDPARAPDPPAP. Over residues 557-571 the composition is skewed to low complexity; that stretch reads DSAYCSSSSSSSSLS. Residue arginine 633 is modified to Omega-N-methylarginine. Over residues 634 to 644 the composition is skewed to basic and acidic residues; the sequence is GRMDTQPDRKP. The residue at position 657 (serine 657) is a Phosphoserine.

It belongs to the GAS2 family. In terms of assembly, interacts with MAPRE1.

The protein resides in the cytoplasm. Its subcellular location is the cytoskeleton. It localises to the stress fiber. In terms of biological role, involved in the cross-linking of microtubules and microfilaments. Regulates microtubule dynamics and stability by interacting with microtubule plus-end tracking proteins, such as MAPRE1, to regulate microtubule growth along actin stress fibers. This Homo sapiens (Human) protein is GAS2-like protein 1 (GAS2L1).